Reading from the N-terminus, the 450-residue chain is Protein DA1-related 3 (450 aa).

The stretch at 1–46 (MVRRKRQEEDEKIEIERVKEESLKLAKQAEEKRRLEESKEQGKRIQ) forms a coiled coil. Composition is skewed to basic and acidic residues over residues 27–47 (KQAE…RIQV) and 56–69 (TSKD…SKDV). Positions 27-87 (KQAEEKRRLE…PSIDGKSEIG (61 aa)) are disordered.

In Arabidopsis thaliana (Mouse-ear cress), this protein is Protein DA1-related 3 (DAR3).